The primary structure comprises 367 residues: Germination protease (367 aa).

A propeptide spanning residues 1–13 (MEEQQIPFQVRTD) is cleaved from the precursor. The interval 267–287 (KDDPSKSLTPAGMSFGNRKLT) is disordered.

Belongs to the peptidase A25 family. In terms of assembly, homotetramer. Post-translationally, autoproteolytically processed. The inactive tetrameric zymogen termed p46 autoprocesses to a smaller form termed p41, which is active only during spore germination.

The catalysed reaction is Endopeptidase action with P4 Glu or Asp, P1 preferably Glu &gt; Asp, P1' hydrophobic and P2' Ala.. Its function is as follows. Initiates the rapid degradation of small, acid-soluble proteins during spore germination. This chain is Germination protease, found in Oceanobacillus iheyensis (strain DSM 14371 / CIP 107618 / JCM 11309 / KCTC 3954 / HTE831).